Reading from the N-terminus, the 253-residue chain is MYFDEEQLLKYTIYAYRLSFFVGICSLFIAKSCLPEFLQYGKTYRPKENSKYSSILERIKKFTVPKAYFSHFYYLATFLSLVTLYFYPKFPIVWIIFGHSLRRLYETLYVLHYTSNSRMNWSHYLVGIWFYSVLLLILNISLYKNSIPNTLNMNAFIIFCIASWDQYKNHVILANLVKYSLPTGRLFRLVCCPHYLDEIIIYSTLLPYEQEFYLTLVWVITSLTISALETKNYYRHKFKDNHVAPYAIIPFII.

4 helical membrane-spanning segments follow: residues 18 to 38 (LSFF…PEFL), 78 to 98 (FLSL…IIFG), 123 to 143 (HYLV…ISLY), and 200 to 220 (IIYS…VWVI).

Belongs to the steroid 5-alpha reductase family. Polyprenal reductase subfamily.

It localises to the endoplasmic reticulum membrane. It carries out the reaction a di-trans,poly-cis-dolichal + NADP(+) = a di-trans,poly-cis-polyprenal + NADPH + H(+). Its pathway is protein modification; protein glycosylation. In terms of biological role, plays a key role in early steps of protein N-linked glycosylation by being involved in the conversion of polyprenol into dolichol. Acts as a polyprenal reductase that mediates the reduction of polyprenal into dolichal in a NADP-dependent mechanism. Dolichols are required for the synthesis of dolichol-linked monosaccharides and the oligosaccharide precursor used for N-glycosylation. This is Polyprenal reductase from Saccharomyces cerevisiae (strain ATCC 204508 / S288c) (Baker's yeast).